The following is a 70-amino-acid chain: DNA-directed RNA polymerase subunit omega (70 aa).

Belongs to the RNA polymerase subunit omega family. In terms of assembly, the RNAP catalytic core consists of 2 alpha, 1 beta, 1 beta' and 1 omega subunit. When a sigma factor is associated with the core the holoenzyme is formed, which can initiate transcription.

The catalysed reaction is RNA(n) + a ribonucleoside 5'-triphosphate = RNA(n+1) + diphosphate. In terms of biological role, promotes RNA polymerase assembly. Latches the N- and C-terminal regions of the beta' subunit thereby facilitating its interaction with the beta and alpha subunits. This Bacillus anthracis protein is DNA-directed RNA polymerase subunit omega.